The chain runs to 137 residues: Glutamate mutase sigma subunit (137 aa).

The B12-binding domain occupies 3-137 (KKTIVLGVIG…ADLKEDLNIK (135 aa)). Residues 13 to 17 (SDCHA), histidine 16, 61 to 63 (SSL), and 93 to 97 (NIVVG) each bind adenosylcob(III)alamin.

This sequence belongs to the methylaspartate mutase GlmS subunit family. As to quaternary structure, heterotetramer composed of 2 epsilon subunits (GlmE) and 2 sigma subunits (GlmS). GlmE exists as a homodimer and GlmS as a monomer. Adenosylcob(III)alamin serves as cofactor.

The catalysed reaction is (2S,3S)-3-methyl-L-aspartate = L-glutamate. It participates in amino-acid degradation; L-glutamate degradation via mesaconate pathway; acetate and pyruvate from L-glutamate: step 1/4. Functionally, catalyzes the carbon skeleton rearrangement of L-glutamate to L-threo-3-methylaspartate ((2S,3S)-3-methylaspartate). This is Glutamate mutase sigma subunit from Clostridium tetani (strain Massachusetts / E88).